We begin with the raw amino-acid sequence, 259 residues long: Phosphatidylglycerol--prolipoprotein diacylglyceryl transferase (259 aa).

4 consecutive transmembrane segments (helical) span residues 12 to 32 (LSLHWYAVCILVGLLLAVYLA), 46 to 66 (IIDFILIAFPLAIIGARIYYV), 83 to 103 (IWNGGIAIYGGLITGTIVLFV), and 109 to 129 (VLNPIHFLDIAAPSVMLAQAI). Position 131 (Arg-131) interacts with a 1,2-diacyl-sn-glycero-3-phospho-(1'-sn-glycerol). The next 3 helical transmembrane spans lie at 167 to 187 (VPTFLYESMWNLIGFVIIMVW), 194 to 214 (LVDGDIISFYLIWYGCGRLVI), and 226 to 246 (GIRVSQYMSVLLIIIAIVFIF).

It belongs to the Lgt family.

Its subcellular location is the cell membrane. The catalysed reaction is L-cysteinyl-[prolipoprotein] + a 1,2-diacyl-sn-glycero-3-phospho-(1'-sn-glycerol) = an S-1,2-diacyl-sn-glyceryl-L-cysteinyl-[prolipoprotein] + sn-glycerol 1-phosphate + H(+). Its pathway is protein modification; lipoprotein biosynthesis (diacylglyceryl transfer). Functionally, catalyzes the transfer of the diacylglyceryl group from phosphatidylglycerol to the sulfhydryl group of the N-terminal cysteine of a prolipoprotein, the first step in the formation of mature lipoproteins. The chain is Phosphatidylglycerol--prolipoprotein diacylglyceryl transferase from Streptococcus equi subsp. equi (strain 4047).